The following is a 600-amino-acid chain: Elongation factor 4 (600 aa).

The region spanning 5–187 is the tr-type G domain; that stretch reads KYIRNFSIIA…AIVNKLPPPK (183 aa). GTP contacts are provided by residues 17–22 and 134–137; these read DHGKST and NKID.

Belongs to the TRAFAC class translation factor GTPase superfamily. Classic translation factor GTPase family. LepA subfamily.

The protein localises to the cell inner membrane. It catalyses the reaction GTP + H2O = GDP + phosphate + H(+). Required for accurate and efficient protein synthesis under certain stress conditions. May act as a fidelity factor of the translation reaction, by catalyzing a one-codon backward translocation of tRNAs on improperly translocated ribosomes. Back-translocation proceeds from a post-translocation (POST) complex to a pre-translocation (PRE) complex, thus giving elongation factor G a second chance to translocate the tRNAs correctly. Binds to ribosomes in a GTP-dependent manner. The sequence is that of Elongation factor 4 from Rickettsia bellii (strain OSU 85-389).